Here is a 279-residue protein sequence, read N- to C-terminus: Bifunctional protein FolD (279 aa).

Residues 158–160 (GRS), Ser183, and Ile224 each bind NADP(+).

Belongs to the tetrahydrofolate dehydrogenase/cyclohydrolase family. In terms of assembly, homodimer.

It carries out the reaction (6R)-5,10-methylene-5,6,7,8-tetrahydrofolate + NADP(+) = (6R)-5,10-methenyltetrahydrofolate + NADPH. The enzyme catalyses (6R)-5,10-methenyltetrahydrofolate + H2O = (6R)-10-formyltetrahydrofolate + H(+). It participates in one-carbon metabolism; tetrahydrofolate interconversion. Catalyzes the oxidation of 5,10-methylenetetrahydrofolate to 5,10-methenyltetrahydrofolate and then the hydrolysis of 5,10-methenyltetrahydrofolate to 10-formyltetrahydrofolate. This is Bifunctional protein FolD from Caldicellulosiruptor saccharolyticus (strain ATCC 43494 / DSM 8903 / Tp8T 6331).